Consider the following 1024-residue polypeptide: MTMITDSLAVVLQRRDWENPGVTQLNRLAAHPPFASWRNSEEARTDRPSQESRSLNGEWRFAWFPAPEAVPESWLERDLPDADTVIVPSNWQMHGYDAPIYTNVTYPIAVNPPYVPTENPTGCYSLTFNIDESWLQEGQTRIIFDGVNSAFHLWCNGRWVGYGQDSRLPSEFDLSAFLHAGENRLAVMVLRWSDGSYLEDQDMWRMSGIFRDVSLLHKPSTQISDFHVATHFNDDFSRAVLEADVQMYGELRDELRVTVSLWQGETQVASGTAPFGGEIIDERGGYADHVTLRLNVENPKLWSAEIPNLYRAVVELHTADGTLIEAEACDVGFREVRIENGLLLLNGKPLLIRGVNRHEHHPLHGQVMDEQTMVQDILLMKQNNFNAVRCSHYPNHPLWYTLCDHYGLYVVDEANIETHGMVPMNRLTDDPRWLPAMSERVTRMVQRDRNHPSVIIWSLGNESGHGANHDALYRWIKSVDPSRPVQYEGGGADTFATDIICPMYARVDEDQPFPAVPKWSIKKWLSLPGETRPLILCEYAHAMGNSLGGFAKYWQAFRQYPRLQGGFVWDWVDQSLIKYDENGNPWSAYGGDFGDTPNDRQFCMNGLVFADRTPHPALTEAKHQQQFFQFSLSGRTIEVTSEYLFRHSDNELLHWMVALDGKPLASGEVPLDVAPQGKQLIELPGLPQPKSAGQLWLTVHVVQPNATTWSAAGHISAWQQWRLAENLSVTLPSAPHAIPQLTTSETDFCIELDNKRWQFNRQSGFLSQMWIGDKKQLLTPLRDQFTRAPLDNDIGVSEATRIDPNAWVERWKAAGHYQAEAALLQCTADTLADAVLITTVHAWQHQGKTLFISRKTYRIDGSGQMAITVDVEVASNTPHPARIGLTCQLAQVAERVNWLGLGPQENYPDRLTAACFDRWDLPLSDMYTPYVFPSENGLRCGTRELNYGPHQWRGDFQFNISRYSQQQLMETSHRHLLHAEEGTWLNIDGFHMGIGGDDSWSPSVSAEFQLSAGSYHYQLLWCQK.

The substrate site is built by Asn-103 and Asp-202. Na(+) is bound at residue Asp-202. 3 residues coordinate Mg(2+): Glu-417, His-419, and Glu-462. Substrate-binding positions include Glu-462 and 538 to 541 (EYAH). The Proton donor role is filled by Glu-462. Glu-538 (nucleophile) is an active-site residue. Asn-598 is a binding site for Mg(2+). Residues Phe-602 and Asn-605 each coordinate Na(+). Residues Asn-605 and Trp-1000 each coordinate substrate.

It belongs to the glycosyl hydrolase 2 family. In terms of assembly, homotetramer. Mg(2+) serves as cofactor. It depends on Na(+) as a cofactor.

It catalyses the reaction Hydrolysis of terminal non-reducing beta-D-galactose residues in beta-D-galactosides.. The protein is Beta-galactosidase 2 of Klebsiella pneumoniae subsp. pneumoniae (strain ATCC 700721 / MGH 78578).